The chain runs to 272 residues: Shikimate dehydrogenase (NADP(+)) (272 aa).

Shikimate-binding positions include 14–16 (SKS) and Thr61. Lys65 (proton acceptor) is an active-site residue. Residue Glu77 participates in NADP(+) binding. Residues Asn86 and Asp102 each contribute to the shikimate site. NADP(+) is bound by residues 126 to 130 (GAGGA), 149 to 154 (NRTVSR), and Met213. Shikimate is bound at residue Tyr215. Gly237 serves as a coordination point for NADP(+).

It belongs to the shikimate dehydrogenase family. Homodimer.

The enzyme catalyses shikimate + NADP(+) = 3-dehydroshikimate + NADPH + H(+). Its pathway is metabolic intermediate biosynthesis; chorismate biosynthesis; chorismate from D-erythrose 4-phosphate and phosphoenolpyruvate: step 4/7. Functionally, involved in the biosynthesis of the chorismate, which leads to the biosynthesis of aromatic amino acids. Catalyzes the reversible NADPH linked reduction of 3-dehydroshikimate (DHSA) to yield shikimate (SA). The polypeptide is Shikimate dehydrogenase (NADP(+)) (Escherichia coli (strain SMS-3-5 / SECEC)).